A 263-amino-acid polypeptide reads, in one-letter code: uncharacterized protein (263 aa).

The WD repeat unit spans residues 53–89; the sequence is SAVTASKFSPDGRWLVNLTDQGYVQLWDVHKGERVKT.

This is an uncharacterized protein from Deinococcus radiodurans (strain ATCC 13939 / DSM 20539 / JCM 16871 / CCUG 27074 / LMG 4051 / NBRC 15346 / NCIMB 9279 / VKM B-1422 / R1).